Consider the following 325-residue polypeptide: tRNA(Ile)-lysidine synthase (325 aa).

35 to 40 (SGGQDS) contacts ATP.

Belongs to the tRNA(Ile)-lysidine synthase family.

The protein localises to the cytoplasm. It catalyses the reaction cytidine(34) in tRNA(Ile2) + L-lysine + ATP = lysidine(34) in tRNA(Ile2) + AMP + diphosphate + H(+). Functionally, ligates lysine onto the cytidine present at position 34 of the AUA codon-specific tRNA(Ile) that contains the anticodon CAU, in an ATP-dependent manner. Cytidine is converted to lysidine, thus changing the amino acid specificity of the tRNA from methionine to isoleucine. The sequence is that of tRNA(Ile)-lysidine synthase from Gloeobacter violaceus (strain ATCC 29082 / PCC 7421).